The primary structure comprises 362 residues: Peptide chain release factor 1 (362 aa).

Q237 carries the post-translational modification N5-methylglutamine.

The protein belongs to the prokaryotic/mitochondrial release factor family. In terms of processing, methylated by PrmC. Methylation increases the termination efficiency of RF1.

Its subcellular location is the cytoplasm. Its function is as follows. Peptide chain release factor 1 directs the termination of translation in response to the peptide chain termination codons UAG and UAA. In Legionella pneumophila (strain Corby), this protein is Peptide chain release factor 1.